The sequence spans 300 residues: Ribonuclease HIII (300 aa).

Residues 83–300 enclose the RNase H type-2 domain; sequence IPIIGSDEVG…THKAQALLTK (218 aa). A divalent metal cation-binding residues include Asp-89, Glu-90, and Asp-194.

Belongs to the RNase HII family. RnhC subfamily. Mn(2+) serves as cofactor. Mg(2+) is required as a cofactor.

It localises to the cytoplasm. It catalyses the reaction Endonucleolytic cleavage to 5'-phosphomonoester.. Endonuclease that specifically degrades the RNA of RNA-DNA hybrids. The sequence is that of Ribonuclease HIII from Streptococcus pyogenes serotype M12 (strain MGAS2096).